The following is an 83-amino-acid chain: Putative snRNP Sm-like protein (83 aa).

Residues 9 to 81 (KPMDVLKNAL…VIFVSPSKGD (73 aa)) enclose the Sm domain.

This sequence belongs to the snRNP Sm proteins family.

The protein is Putative snRNP Sm-like protein of Thermoplasma volcanium (strain ATCC 51530 / DSM 4299 / JCM 9571 / NBRC 15438 / GSS1).